A 228-amino-acid polypeptide reads, in one-letter code: Peptide deformylase (228 aa).

Disordered regions lie at residues 1 to 28 and 116 to 138; these read MSQDRRYTGCNTHSNTHSAQDREKEGAV and GVPKRQTNKQQANNSTSCDEPDR. 2 stretches are compositionally biased toward polar residues: residues 8–18 and 123–133; these read TGCNTHSNTHS and NKQQANNSTSC. Fe cation-binding residues include Cys-141 and His-183. Residue Glu-184 is part of the active site. Residue His-187 participates in Fe cation binding.

This sequence belongs to the polypeptide deformylase family. It depends on Fe(2+) as a cofactor.

It carries out the reaction N-terminal N-formyl-L-methionyl-[peptide] + H2O = N-terminal L-methionyl-[peptide] + formate. In terms of biological role, removes the formyl group from the N-terminal Met of newly synthesized proteins. Requires at least a dipeptide for an efficient rate of reaction. N-terminal L-methionine is a prerequisite for activity but the enzyme has broad specificity at other positions. The protein is Peptide deformylase of Tropheryma whipplei (strain Twist) (Whipple's bacillus).